A 177-amino-acid chain; its full sequence is Glutathione peroxidase homolog (177 aa).

Cysteine 35 is an active-site residue.

The protein belongs to the glutathione peroxidase family.

Its function is as follows. Important in the cellular metabolism or defense processes particular to this pathogen. In Neisseria meningitidis serogroup A / serotype 4A (strain DSM 15465 / Z2491), this protein is Glutathione peroxidase homolog (gpxA).